We begin with the raw amino-acid sequence, 235 residues long: tRNA (adenine(37)-N6)-methyltransferase (235 aa).

Positions 6–147 constitute a TsaA-like domain; that stretch reads FEQIGVIRSP…YLPFAESLPD (142 aa). S-adenosyl-L-methionine contacts are provided by residues 23 to 25, 64 to 65, Arg92, and 127 to 130; these read PRQ, HQ, and VDGT.

It belongs to the tRNA methyltransferase O family. Homodimer.

It catalyses the reaction N(6)-L-threonylcarbamoyladenosine(37) in tRNA + S-adenosyl-L-methionine = N(6)-methyl,N(6)-L-threonylcarbamoyladenosine(37) in tRNA + S-adenosyl-L-homocysteine + H(+). In terms of biological role, S-adenosyl-L-methionine-dependent methyltransferase responsible for the addition of the methyl group in the formation of N6-methyl-N6-threonylcarbamoyladenosine at position 37 (m(6)t(6)A37) of the tRNA anticodon loop of tRNA(Thr)(GGU) that read codons starting with adenosine. The methyl group of m(6)t(6)A37 appears to slightly improve the efficiency of the tRNA decoding ability. This is tRNA (adenine(37)-N6)-methyltransferase from Escherichia coli (strain K12).